The sequence spans 927 residues: MDTREINGFASAARSISLPTQPNYSSKPVQEALKHLASINLRELCNEAKVERCRATRDLASCGRFVNYVLNPCGHASLCTECCQRCDVCPICRSTLPKFGDRLRLRLYYECVEAGLISRTHEEASQDSDEDEHQLAADVHRLYSLFDVAMNNNLISVVCHYITNVCMDETAVSSDPVIAFLLDEVVVKDWVKRTFRSTLAELQEIYNLETKEMQAWLDKLLRCSKQVAGICSVLEVMESAFKGSVSPQLQDVQTLRENIGKTKQHLDIMVWCIRHGFLDDVRSRYSNFTSWNALVGERKSNAVKRAWPDAVDQSSDCSVQSASLFIEDALENLEREPEYSQEIGADLEVGRLQKDKRSFLRSKIEGTSGSYPFENLRTAADMLFLHGGSDLVVAKQAIFLYYLFDRHWTTPEKYWKHTIDDFAATFGITRHSLLESFVFYLLDDHSEEALQEACRILPEICGPETYPKVAQVLLERDNPETALMVLRWSGRDGVSELVSIGEAVTALRVRVECGLLSEAFTYQRTLCLKVKENNLKNGAVKHASDDLDIWSWTEWMEILVNEFCCLSIRRNLVDRIIELPWNPDEEKYLHRCLLDSATDDPSSAVGSLLVVFYLQRYRYIQAYQVDLRLQKIEEAFVSDNQIGEEVMFRMRSQSHWRKELVDRAIDILPVIQQQQVRSGQFSEMEDASEGAKKSDLPDAPDMITSSVPFATTNSVFLQSANNARAREPVANNGSPFQPGHMIGNASHDLSHGRLFTNANRGQKSEVRSVTKNLKFGEMSTPFKDLNRARGNSQLQGKRTEESSPEVNVDRYIENNMSSPYLRRITANNPVTVKSSSNHLNGSSQKPESTFFGTRMQPDKDNFVDLDDPMDMSSSLKDNNNNVLATESRNNSGGLRWRSDETSDDEDELTSFGSMPVKGRRRRRFAAR.

Residues Cys53–Arg93 form an RING-type; degenerate zinc finger. Disordered regions lie at residues Ser678–Ala699, Phe782–Val806, and Val832–Arg927. A compositionally biased stretch (basic and acidic residues) spans Lys797–Val806. Polar residues-rich tracts occupy residues Val832–Phe851 and Asn878–Gly892. Basic residues predominate over residues Lys917–Arg927.

Interacts with SCRM/ICE1, FLK and MSI4/FVE. In terms of tissue distribution, ubiquitously expressed with higher levels in leaf vasculature, roots and root tips.

The protein resides in the nucleus. Its subcellular location is the cytoplasm. It catalyses the reaction S-ubiquitinyl-[E2 ubiquitin-conjugating enzyme]-L-cysteine + [acceptor protein]-L-lysine = [E2 ubiquitin-conjugating enzyme]-L-cysteine + N(6)-ubiquitinyl-[acceptor protein]-L-lysine.. It functions in the pathway protein modification; protein ubiquitination. In terms of biological role, E3 ubiquitin-protein ligase that mediates ubiquitination and subsequent proteasomal degradation of the transcription factor ICE1. Acts as a negative regulator of cold signaling pathways. Probably involved in recruiting the NUP107-160 subcomplex of the nuclear pore complex to chromatin. Controls flowering time in response to ambient temperatures (16 and 23 degrees Celsius) and intermittent cold, probably via the regulation of FT and TSF levels. This chain is E3 ubiquitin-protein ligase HOS1 (HOS1), found in Arabidopsis thaliana (Mouse-ear cress).